The following is a 368-amino-acid chain: 2-aminoethylphosphonate--pyruvate transaminase (368 aa).

At Lys-192 the chain carries N6-(pyridoxal phosphate)lysine.

It belongs to the class-V pyridoxal-phosphate-dependent aminotransferase family. PhnW subfamily. In terms of assembly, homodimer. Requires pyridoxal 5'-phosphate as cofactor.

The catalysed reaction is (2-aminoethyl)phosphonate + pyruvate = phosphonoacetaldehyde + L-alanine. Involved in phosphonate degradation. In Pseudomonas putida (strain ATCC 47054 / DSM 6125 / CFBP 8728 / NCIMB 11950 / KT2440), this protein is 2-aminoethylphosphonate--pyruvate transaminase.